The sequence spans 679 residues: NADPH--cytochrome P450 reductase (679 aa).

Residues methionine 1–proline 21 lie on the Lumenal side of the membrane. Residues phenylalanine 22–phenylalanine 42 traverse the membrane as a helical segment. Topologically, residues leucine 43 to serine 679 are cytoplasmic. In terms of domain architecture, Flavodoxin-like spans leucine 84–tryptophan 228. Residues serine 90–glycine 95, alanine 142–glycine 145, leucine 177–asparagine 186, and aspartate 212 contribute to the FMN site. Residues lysine 283 to proline 523 form the FAD-binding FR-type domain. NADP(+) is bound at residue arginine 302. FAD contacts are provided by residues arginine 458–serine 461, threonine 476–valine 478, tyrosine 482, and glycine 492–threonine 495. NADP(+)-binding positions include threonine 537, serine 597–arginine 598, lysine 603–glutamine 607, and aspartate 640. Residue tryptophan 678 participates in FAD binding.

Belongs to the NADPH--cytochrome P450 reductase family. It in the N-terminal section; belongs to the flavodoxin family. The protein in the C-terminal section; belongs to the flavoprotein pyridine nucleotide cytochrome reductase family. As to quaternary structure, interacts with sturkopf. FAD is required as a cofactor. Requires FMN as cofactor. As to expression, high in antennae.

The protein resides in the endoplasmic reticulum membrane. It catalyses the reaction 2 oxidized [cytochrome P450] + NADPH = 2 reduced [cytochrome P450] + NADP(+) + H(+). In terms of biological role, this enzyme is required for electron transfer from NADP to cytochrome p450 in microsomes. It can also provide electron transfer to heme oxygenase and cytochrome b5. May function to clear the olfactory organ (antennae) from accumulating chemicals. The chain is NADPH--cytochrome P450 reductase (Cpr) from Drosophila melanogaster (Fruit fly).